The sequence spans 1362 residues: DNA-directed RNA polymerase subunit beta (1362 aa).

This sequence belongs to the RNA polymerase beta chain family. The RNAP catalytic core consists of 2 alpha, 1 beta, 1 beta' and 1 omega subunit. When a sigma factor is associated with the core the holoenzyme is formed, which can initiate transcription.

It catalyses the reaction RNA(n) + a ribonucleoside 5'-triphosphate = RNA(n+1) + diphosphate. In terms of biological role, DNA-dependent RNA polymerase catalyzes the transcription of DNA into RNA using the four ribonucleoside triphosphates as substrates. This chain is DNA-directed RNA polymerase subunit beta, found in Acinetobacter baumannii (strain AB307-0294).